Consider the following 416-residue polypeptide: Serine hydroxymethyltransferase (416 aa).

(6S)-5,6,7,8-tetrahydrofolate-binding positions include L121 and 125-127 (GHL). K230 is subject to N6-(pyridoxal phosphate)lysine.

This sequence belongs to the SHMT family. In terms of assembly, homodimer. Requires pyridoxal 5'-phosphate as cofactor.

It localises to the cytoplasm. It catalyses the reaction (6R)-5,10-methylene-5,6,7,8-tetrahydrofolate + glycine + H2O = (6S)-5,6,7,8-tetrahydrofolate + L-serine. It functions in the pathway one-carbon metabolism; tetrahydrofolate interconversion. The protein operates within amino-acid biosynthesis; glycine biosynthesis; glycine from L-serine: step 1/1. Catalyzes the reversible interconversion of serine and glycine with tetrahydrofolate (THF) serving as the one-carbon carrier. This reaction serves as the major source of one-carbon groups required for the biosynthesis of purines, thymidylate, methionine, and other important biomolecules. Also exhibits THF-independent aldolase activity toward beta-hydroxyamino acids, producing glycine and aldehydes, via a retro-aldol mechanism. This chain is Serine hydroxymethyltransferase, found in Nitrosospira multiformis (strain ATCC 25196 / NCIMB 11849 / C 71).